The sequence spans 161 residues: UPF0178 protein BOV_1904 (161 aa).

This sequence belongs to the UPF0178 family.

The chain is UPF0178 protein BOV_1904 from Brucella ovis (strain ATCC 25840 / 63/290 / NCTC 10512).